We begin with the raw amino-acid sequence, 441 residues long: NADH-quinone oxidoreductase subunit D 1 (441 aa).

Belongs to the complex I 49 kDa subunit family. NDH-1 is composed of 14 different subunits. Subunits NuoB, C, D, E, F, and G constitute the peripheral sector of the complex.

The protein resides in the cell membrane. It catalyses the reaction a quinone + NADH + 5 H(+)(in) = a quinol + NAD(+) + 4 H(+)(out). In terms of biological role, NDH-1 shuttles electrons from NADH, via FMN and iron-sulfur (Fe-S) centers, to quinones in the respiratory chain. The immediate electron acceptor for the enzyme in this species is believed to be a menaquinone. Couples the redox reaction to proton translocation (for every two electrons transferred, four hydrogen ions are translocated across the cytoplasmic membrane), and thus conserves the redox energy in a proton gradient. The polypeptide is NADH-quinone oxidoreductase subunit D 1 (Salinispora arenicola (strain CNS-205)).